Consider the following 265-residue polypeptide: Glutamate racemase (265 aa).

Residues Asp-9–Ser-10 and Tyr-41–Ser-42 each bind substrate. The Proton donor/acceptor role is filled by Cys-73. Asn-74–Thr-75 lines the substrate pocket. The active-site Proton donor/acceptor is Cys-184. Position 185–186 (Thr-185–His-186) interacts with substrate.

This sequence belongs to the aspartate/glutamate racemases family.

It catalyses the reaction L-glutamate = D-glutamate. The protein operates within cell wall biogenesis; peptidoglycan biosynthesis. Functionally, provides the (R)-glutamate required for cell wall biosynthesis. The sequence is that of Glutamate racemase from Haemophilus ducreyi (strain 35000HP / ATCC 700724).